The sequence spans 441 residues: Ribosomal protein uS12 methylthiotransferase RimO (441 aa).

One can recognise an MTTase N-terminal domain in the interval 8–118; it reads PKIGFVSLGC…VLQHVHHYVP (111 aa). [4Fe-4S] cluster contacts are provided by Cys-17, Cys-53, Cys-82, Cys-150, Cys-154, and Cys-157. In terms of domain architecture, Radical SAM core spans 136–373; it reads LTPRHYAYLK…MALQQQISAE (238 aa). Residues 376–441 enclose the TRAM domain; sequence QEKVGREILV…DEYDLWGSLV (66 aa).

It belongs to the methylthiotransferase family. RimO subfamily. The cofactor is [4Fe-4S] cluster.

Its subcellular location is the cytoplasm. The catalysed reaction is L-aspartate(89)-[ribosomal protein uS12]-hydrogen + (sulfur carrier)-SH + AH2 + 2 S-adenosyl-L-methionine = 3-methylsulfanyl-L-aspartate(89)-[ribosomal protein uS12]-hydrogen + (sulfur carrier)-H + 5'-deoxyadenosine + L-methionine + A + S-adenosyl-L-homocysteine + 2 H(+). Its function is as follows. Catalyzes the methylthiolation of an aspartic acid residue of ribosomal protein uS12. The polypeptide is Ribosomal protein uS12 methylthiotransferase RimO (Cronobacter sakazakii (strain ATCC BAA-894) (Enterobacter sakazakii)).